A 256-amino-acid polypeptide reads, in one-letter code: Na(+)-translocating NADH-quinone reductase subunit E (256 aa).

The next 6 helical transmembrane spans lie at 1 to 21, 50 to 70, 83 to 103, 123 to 143, 149 to 169, and 189 to 209; these read MWLGAYTWLNVFGILLQAAFI, MSVALVLTVTGSINWFVHAFI, LASVNLGFLELIIFIVVIAAF, GIFLPLIAVNCAILGGVLFGI, FIPMMIFSLGAGCGWWLAIVI, and MGISFITTGLIAMAFMSLTGI. Residues 229-249 show a composition bias toward polar residues; it reads ENTTNPLKESSSKHQPSISKA. Positions 229 to 256 are disordered; sequence ENTTNPLKESSSKHQPSISKARTQRRSL.

It belongs to the NqrDE/RnfAE family. Composed of six subunits; NqrA, NqrB, NqrC, NqrD, NqrE and NqrF.

The protein resides in the cell inner membrane. The enzyme catalyses a ubiquinone + n Na(+)(in) + NADH + H(+) = a ubiquinol + n Na(+)(out) + NAD(+). NQR complex catalyzes the reduction of ubiquinone-1 to ubiquinol by two successive reactions, coupled with the transport of Na(+) ions from the cytoplasm to the periplasm. NqrA to NqrE are probably involved in the second step, the conversion of ubisemiquinone to ubiquinol. This chain is Na(+)-translocating NADH-quinone reductase subunit E, found in Chlamydia pneumoniae (Chlamydophila pneumoniae).